The primary structure comprises 131 residues: Small ribosomal subunit protein uS19 (131 aa).

This sequence belongs to the universal ribosomal protein uS19 family.

In terms of biological role, protein S19 forms a complex with S13 that binds strongly to the 16S ribosomal RNA. The sequence is that of Small ribosomal subunit protein uS19 from Nitrosopumilus maritimus (strain SCM1).